Reading from the N-terminus, the 69-residue chain is MMSKLGVLLTICLLLFPLSALPLDGDQPADQPAERMQDISPEQNPLFHPDKRGCCPFPACTTHIICRCC.

The signal sequence occupies residues M1–A20. A propeptide spanning residues L21–R52 is cleaved from the precursor. 3 cysteine pairs are disulfide-bonded: C54–C68, C55–C66, and C60–C69. C69 is subject to Cysteine amide.

Expressed by the venom duct.

Its subcellular location is the secreted. This is Conotoxin reg3f from Conus regius (Crown cone).